The following is a 314-amino-acid chain: MLLLADMDVVNQLVAGGQFRVVKEPLGFVKVLQWVFAIFAFATCGSYTGELRLSVECANKTESALNIEVEFEYPFRLHQVYFDAPSCVKGGTTKIFLVGDYSSSAEFFVTVAVFAFLYSMGALATYIFLQNKYRENNKGPMMDFLATAVFAFMWLVSSSAWAKGLSDVKMATDPENIIKEMPMCRQTGNTCKELRDPVTSGLNTSVVFGFLNLVLWVGNLWFVFKETGWAAPFMRAPPGAPEKQPAPGDAYGDAGYGQGPGGYGPQDSYGPQGGYQPDYGQPASGGGGGYGPQGDYGQQGYGQQGAPTSFSNQM.

The Cytoplasmic segment spans residues 1–25; the sequence is MLLLADMDVVNQLVAGGQFRVVKEP. The MARVEL domain occupies 21–228; it reads VVKEPLGFVK…NLWFVFKETG (208 aa). A helical transmembrane segment spans residues 26-49; it reads LGFVKVLQWVFAIFAFATCGSYTG. The Vesicular portion of the chain corresponds to 50–107; it reads ELRLSVECANKTESALNIEVEFEYPFRLHQVYFDAPSCVKGGTTKIFLVGDYSSSAEF. Asparagine 59 carries N-linked (GlcNAc...) asparagine glycosylation. Tyrosine 81 is modified (phosphotyrosine). Residues 108-131 traverse the membrane as a helical segment; the sequence is FVTVAVFAFLYSMGALATYIFLQN. Residues 132–138 lie on the Cytoplasmic side of the membrane; it reads KYRENNK. Residues 139–162 traverse the membrane as a helical segment; the sequence is GPMMDFLATAVFAFMWLVSSSAWA. The Vesicular segment spans residues 163 to 200; sequence KGLSDVKMATDPENIIKEMPMCRQTGNTCKELRDPVTS. The chain crosses the membrane as a helical span at residues 201–224; that stretch reads GLNTSVVFGFLNLVLWVGNLWFVF. Residues 225–314 lie on the Cytoplasmic side of the membrane; that stretch reads KETGWAAPFM…GAPTSFSNQM (90 aa). Phosphothreonine is present on threonine 227. Residues 239-314 form a disordered region; it reads GAPEKQPAPG…GAPTSFSNQM (76 aa). Over residues 254–264 the composition is skewed to gly residues; it reads AGYGQGPGGYG. A repeats, Gly-rich region spans residues 255 to 305; that stretch reads GYGQGPGGYGPQDSYGPQGGYQPDYGQPASGGGGGYGPQGDYGQQGYGQQG. Residues 265-282 show a composition bias toward low complexity; that stretch reads PQDSYGPQGGYQPDYGQP. Phosphotyrosine is present on residues tyrosine 279 and tyrosine 296. Residues 283–303 show a composition bias toward gly residues; it reads ASGGGGGYGPQGDYGQQGYGQ.

It belongs to the synaptophysin/synaptobrevin family. In terms of assembly, homohexamer or homotetramer. Interacts with SRCIN1. Interacts with VAMP2; the interaction is inhibited by interaction of VAPM2 with SEPT8. Post-translationally, ubiquitinated; mediated by SIAH1 or SIAH2 and leading to its subsequent proteasomal degradation. Phosphorylated by SRC.

The protein localises to the cytoplasmic vesicle. It localises to the secretory vesicle. Its subcellular location is the synaptic vesicle membrane. It is found in the synapse. The protein resides in the synaptosome. In terms of biological role, possibly involved in structural functions as organizing other membrane components or in targeting the vesicles to the plasma membrane. Involved in the regulation of short-term and long-term synaptic plasticity. The chain is Synaptophysin (Syp) from Mus musculus (Mouse).